Consider the following 72-residue polypeptide: UPF0352 protein NTHI1007 (72 aa).

It belongs to the UPF0352 family.

This chain is UPF0352 protein NTHI1007, found in Haemophilus influenzae (strain 86-028NP).